Consider the following 116-residue polypeptide: Protein Rev (116 aa).

Position 5 is a phosphoserine; by host CK2 (serine 5). Residues 18 to 26 are homomultimerization; it reads IIKILYQSN. The tract at residues 26 to 48 is disordered; sequence NPYSKPNGSRQARRNRRRRWRAR. The Nuclear localization signal and RNA-binding (RRE) motif lies at 34 to 50; it reads SRQARRNRRRRWRARQN. The segment covering 36–47 has biased composition (basic residues); sequence QARRNRRRRWRA. Residues 73-84 carry the Nuclear export signal and binding to XPO1 motif; sequence LQLPPIERLRLD. At serine 92 the chain carries Phosphoserine; by host.

The protein belongs to the HIV-1 REV protein family. Homomultimer; when bound to the RRE. Multimeric assembly is essential for activity and may involve XPO1. Binds to human KPNB1, XPO1, TNPO1, RANBP5 and IPO7. Interacts with the viral Integrase. Interacts with human KHDRBS1. Interacts with human NAP1; this interaction decreases Rev multimerization and stimulates its activity. Interacts with human DEAD-box helicases DDX3 and DDX24; these interactions may serve for viral RNA export to the cytoplasm and packaging, respectively. Interacts with human PSIP1; this interaction may inhibit HIV-1 DNA integration by promoting dissociation of the Integrase-LEDGF/p75 complex. Post-translationally, asymmetrically arginine dimethylated at one site by host PRMT6. Methylation impairs the RNA-binding activity and export of viral RNA from the nucleus to the cytoplasm. Phosphorylated by protein kinase CK2. Presence of, and maybe binding to the N-terminus of the regulatory beta subunit of CK2 is necessary for CK2-mediated Rev's phosphorylation.

Its subcellular location is the host nucleus. It is found in the host nucleolus. It localises to the host cytoplasm. Escorts unspliced or incompletely spliced viral pre-mRNAs (late transcripts) out of the nucleus of infected cells. These pre-mRNAs carry a recognition sequence called Rev responsive element (RRE) located in the env gene, that is not present in fully spliced viral mRNAs (early transcripts). This function is essential since most viral proteins are translated from unspliced or partially spliced pre-mRNAs which cannot exit the nucleus by the pathway used by fully processed cellular mRNAs. Rev itself is translated from a fully spliced mRNA that readily exits the nucleus. Rev's nuclear localization signal (NLS) binds directly to KPNB1/Importin beta-1 without previous binding to KPNA1/Importin alpha-1. KPNB1 binds to the GDP bound form of RAN (Ran-GDP) and targets Rev to the nucleus. In the nucleus, the conversion from Ran-GDP to Ran-GTP dissociates Rev from KPNB1 and allows Rev's binding to the RRE in viral pre-mRNAs. Rev multimerization on the RRE via cooperative assembly exposes its nuclear export signal (NES) to the surface. Rev can then form a complex with XPO1/CRM1 and Ran-GTP, leading to nuclear export of the complex. Conversion from Ran-GTP to Ran-GDP mediates dissociation of the Rev/RRE/XPO1/RAN complex, so that Rev can return to the nucleus for a subsequent round of export. Beside KPNB1, also seems to interact with TNPO1/Transportin-1, RANBP5/IPO5 and IPO7/RANBP7 for nuclear import. The nucleoporin-like HRB/RIP is an essential cofactor that probably indirectly interacts with Rev to release HIV RNAs from the perinuclear region to the cytoplasm. The sequence is that of Protein Rev from Homo sapiens (Human).